A 393-amino-acid chain; its full sequence is MARNNYLFTSESVSEGHPDKVCDRISDAILDAFLSEEPEARVACETFATTNRVVIGGEVGLSDQDKLAEYMGQVDPIVRACVKDIGYEQDKFHHETVEITNLLHEQSAHIAQGVDAAENKDEGAGDQGIMFGFAVAETPELMPAPIHYAHAILKKLAEVRKSGEQAVLGPDAKSQLSVRYEDGTPVGVSSIVLSTQHLDESLTSDDVRAIVEPYIRGELPDGWISAETEWHVNPTGKFVIGGPDGDAGLTGRKIIVDTYGGAAPHGGGAFSGKDPTKVDRSAAYASRYLAKNVVAAGLAHRCTIQLSYAIGVAKPLSIYCDTHQTGQVHEAEIERALGQVMDLTPRGIRTHLGMNRPIYERTAAYGHFGRAAEADGGFSWEKTDLADAIKAAL.

His-17 is a binding site for ATP. Asp-19 serves as a coordination point for Mg(2+). Glu-45 contacts K(+). 2 residues coordinate L-methionine: Glu-58 and Gln-106. Residues 106-116 (QSAHIAQGVDA) are flexible loop. Residues 171-173 (DAK), 237-238 (KF), Asp-246, 252-253 (RK), Ala-269, and Lys-273 each bind ATP. Residue Asp-246 coordinates L-methionine. Lys-277 is a binding site for L-methionine.

It belongs to the AdoMet synthase family. Homotetramer; dimer of dimers. It depends on Mg(2+) as a cofactor. Requires K(+) as cofactor.

The protein localises to the cytoplasm. It carries out the reaction L-methionine + ATP + H2O = S-adenosyl-L-methionine + phosphate + diphosphate. The protein operates within amino-acid biosynthesis; S-adenosyl-L-methionine biosynthesis; S-adenosyl-L-methionine from L-methionine: step 1/1. In terms of biological role, catalyzes the formation of S-adenosylmethionine (AdoMet) from methionine and ATP. The overall synthetic reaction is composed of two sequential steps, AdoMet formation and the subsequent tripolyphosphate hydrolysis which occurs prior to release of AdoMet from the enzyme. This is S-adenosylmethionine synthase from Jannaschia sp. (strain CCS1).